The following is a 258-amino-acid chain: Cyclohexa-1,5-dienecarbonyl-CoA hydratase (258 aa).

The protein belongs to the enoyl-CoA hydratase/isomerase family.

The catalysed reaction is cyclohexa-1,5-diene-1-carbonyl-CoA + H2O = 6-hydroxycyclohex-1-ene-1-carbonyl-CoA. It participates in aromatic compound metabolism; benzoyl-CoA degradation. Catalyzes the hydration of cyclohexa-1,5-diene-1-carboxyl-CoA. This Thauera aromatica protein is Cyclohexa-1,5-dienecarbonyl-CoA hydratase (dch).